The sequence spans 107 residues: Large ribosomal subunit protein uL24 (107 aa).

The protein belongs to the universal ribosomal protein uL24 family. As to quaternary structure, part of the 50S ribosomal subunit.

Functionally, one of two assembly initiator proteins, it binds directly to the 5'-end of the 23S rRNA, where it nucleates assembly of the 50S subunit. Its function is as follows. One of the proteins that surrounds the polypeptide exit tunnel on the outside of the subunit. This chain is Large ribosomal subunit protein uL24, found in Streptomyces griseus subsp. griseus (strain JCM 4626 / CBS 651.72 / NBRC 13350 / KCC S-0626 / ISP 5235).